Consider the following 150-residue polypeptide: Lipoprotein signal peptidase (150 aa).

The next 3 membrane-spanning stretches (helical) occupy residues 5 to 25, 59 to 79, and 82 to 102; these read LSLV…NWVV, QQWF…WFLW, and MGQN…LGNF. Active-site residues include D113 and D129. The chain crosses the membrane as a helical span at residues 124 to 144; that stretch reads IFNIADILLSVGFVVLFIAIL.

It belongs to the peptidase A8 family.

It is found in the cell membrane. It catalyses the reaction Release of signal peptides from bacterial membrane prolipoproteins. Hydrolyzes -Xaa-Yaa-Zaa-|-(S,diacylglyceryl)Cys-, in which Xaa is hydrophobic (preferably Leu), and Yaa (Ala or Ser) and Zaa (Gly or Ala) have small, neutral side chains.. It participates in protein modification; lipoprotein biosynthesis (signal peptide cleavage). In terms of biological role, this protein specifically catalyzes the removal of signal peptides from prolipoproteins. The protein is Lipoprotein signal peptidase of Lactococcus lactis subsp. cremoris (strain SK11).